The chain runs to 66 residues: Large ribosomal subunit protein bL35 (66 aa).

2 stretches are compositionally biased toward basic residues: residues 1–15 (MPKL…KRFK) and 28–45 (TKRH…RTRR). The disordered stretch occupies residues 1-49 (MPKLKTKSSAKKRFKVTASGRVMSAQSTKRHGMTKRSKRSLRTRRGIAQ).

The protein belongs to the bacterial ribosomal protein bL35 family.

This Anaplasma marginale (strain Florida) protein is Large ribosomal subunit protein bL35.